The primary structure comprises 112 residues: Hydrogenase maturation factor HypA (112 aa).

His-2 contributes to the Ni(2+) binding site. 4 residues coordinate Zn(2+): Cys-72, Cys-75, Cys-88, and Cys-91.

It belongs to the HypA/HybF family.

Its function is as follows. Involved in the maturation of [NiFe] hydrogenases. Required for nickel insertion into the metal center of the hydrogenase. This Francisella philomiragia subsp. philomiragia (strain ATCC 25017 / CCUG 19701 / FSC 153 / O#319-036) protein is Hydrogenase maturation factor HypA.